The following is a 123-amino-acid chain: Protein LLP homolog (123 aa).

Residues 1–21 (MAKSLRSKWKRKMRAEKRKKN) show a composition bias toward basic residues. 2 disordered regions span residues 1–22 (MAKS…KKNA) and 61–123 (DLDV…KLAW). Residues 70 to 89 (ESSKMDTELKRNKKNLRDQH) are compositionally biased toward basic and acidic residues. Over residues 100–123 (QQKKLKSQCGKKKGKSKQAKKLAW) the composition is skewed to basic residues.

It belongs to the learning-associated protein family.

It is found in the nucleus. The protein localises to the nucleolus. The protein resides in the chromosome. Regulates dendritic and spine growth and synaptic transmission. In Xenopus laevis (African clawed frog), this protein is Protein LLP homolog (llph).